Reading from the N-terminus, the 150-residue chain is Cytochrome b5 type B (150 aa).

A propeptide spanning residues 1 to 15 (MSGSMATAEASGSDG) is cleaved from the precursor. Residues 1–21 (MSGSMATAEASGSDGKGQEVE) form a disordered region. A Phosphoserine modification is found at Ser23. A Cytochrome b5 heme-binding domain is found at 24-100 (VTYYRMEEVA…LKQYYIGDIH (77 aa)). N6-acetyllysine is present on Lys34. At Ser37 the chain carries Phosphoserine. Lys39 carries the post-translational modification N6-methyllysine. Residues His59 and His83 each coordinate heme. At Ser84 the chain carries Phosphoserine. The helical transmembrane segment at 122 to 144 (CWAYWILPIIGAVLLGFLYRYYT) threads the bilayer.

The protein belongs to the cytochrome b5 family. Component of a complex composed of cytochrome b5, NADH-cytochrome b5 reductase (CYB5R3) and MTARC2.

It is found in the mitochondrion outer membrane. Functionally, cytochrome b5 is a membrane-bound hemoprotein functioning as an electron carrier for several membrane-bound oxygenases. The sequence is that of Cytochrome b5 type B (CYB5B) from Pongo abelii (Sumatran orangutan).